Here is a 532-residue protein sequence, read N- to C-terminus: D-arabinono-1,4-lactone oxidase (532 aa).

The region spanning 25–199 (YSARPRLYFQ…VRATIRVVPA (175 aa)) is the FAD-binding PCMH-type domain. Histidine 62 is modified (pros-8alpha-FAD histidine).

The protein belongs to the oxygen-dependent FAD-linked oxidoreductase family. The cofactor is FAD.

It is found in the mitochondrion membrane. It carries out the reaction D-arabinono-1,4-lactone + O2 = dehydro-D-arabinono-1,4-lactone + H2O2 + H(+). It participates in cofactor biosynthesis; D-erythroascorbate biosynthesis; dehydro-D-arabinono-1,4-lactone from D-arabinose: step 2/2. The protein is D-arabinono-1,4-lactone oxidase (ALO1) of Eremothecium gossypii (strain ATCC 10895 / CBS 109.51 / FGSC 9923 / NRRL Y-1056) (Yeast).